Consider the following 206-residue polypeptide: Inactive ribonuclease-like protein 9 (206 aa).

An N-terminal signal peptide occupies residues 1-26 (MMRTLITTHSLLLFLLLLQLLQPLQF). Cystine bridges form between Cys-99–Cys-154, Cys-117–Cys-169, and Cys-124–Cys-131. Asn-132 carries N-linked (GlcNAc...) asparagine glycosylation.

This sequence belongs to the pancreatic ribonuclease family.

The protein localises to the secreted. Its function is as follows. Does not exhibit any ribonuclease activity. The sequence is that of Inactive ribonuclease-like protein 9 (RNASE9) from Saimiri boliviensis boliviensis (Bolivian squirrel monkey).